A 331-amino-acid polypeptide reads, in one-letter code: MKQTVYIASPESQQIHVWNLNHEGVLTLTQVVDVPGQVQPMVVSPDKRYLYVGVRPEFRVLAYRIAPDDGALTFAAESALPGSPTHISTDHHGQFVFVGSYNAGNVSVTRLEDGLPVGVVDVVEGLDGCHSANISPDNRTLWVPALKQDRICLFTVSDDGHLVAQEPAEVTTVEGAGPRHMVFHPNEQYAYCVNELNSSVDVWELKDPHGNIECVQTLDMMPENFSDTRWAADIHITPDGRHLYACDRTASLITVFSVSEDGSVLSKEGFQPTETQQRGFNVDHSGKYLIAAGQKSHHISVYEIVGEQGLLHEKGRYAVGQGPMWVVVNAH.

Lysine 287 bears the N6-acetyllysine mark.

The protein belongs to the cycloisomerase 2 family.

It carries out the reaction 6-phospho-D-glucono-1,5-lactone + H2O = 6-phospho-D-gluconate + H(+). The protein operates within carbohydrate degradation; pentose phosphate pathway; D-ribulose 5-phosphate from D-glucose 6-phosphate (oxidative stage): step 2/3. Its function is as follows. Catalyzes the hydrolysis of 6-phosphogluconolactone to 6-phosphogluconate. This is 6-phosphogluconolactonase from Escherichia coli O7:K1 (strain IAI39 / ExPEC).